The primary structure comprises 449 residues: Tubulin beta-4 chain (449 aa).

The short motif at 1 to 4 is the MREI motif element; it reads MREI. GTP is bound by residues Gln11, Glu69, Ser138, Gly142, Thr143, Gly144, Asn204, and Asn226. Glu69 is a binding site for Mg(2+). Positions 421-449 are disordered; the sequence is EYQQYQDATAEEEGEMYEDDEEESEQGAK. Positions 429-449 are enriched in acidic residues; the sequence is TAEEEGEMYEDDEEESEQGAK. 5-glutamyl polyglutamate is present on Glu438. A Phosphoserine modification is found at Ser444.

This sequence belongs to the tubulin family. In terms of assembly, dimer of alpha and beta chains. A typical microtubule is a hollow water-filled tube with an outer diameter of 25 nm and an inner diameter of 15 nM. Alpha-beta heterodimers associate head-to-tail to form protofilaments running lengthwise along the microtubule wall with the beta-tubulin subunit facing the microtubule plus end conferring a structural polarity. Microtubules usually have 13 protofilaments but different protofilament numbers can be found in some organisms and specialized cells. Mg(2+) is required as a cofactor. In terms of processing, some glutamate residues at the C-terminus are polyglycylated, resulting in polyglycine chains on the gamma-carboxyl group. Glycylation is mainly limited to tubulin incorporated into axonemes (cilia and flagella) whereas glutamylation is prevalent in neuronal cells, centrioles, axonemes, and the mitotic spindle. Both modifications can coexist on the same protein on adjacent residues, and lowering polyglycylation levels increases polyglutamylation, and reciprocally. The precise function of polyglycylation is still unclear. Post-translationally, some glutamate residues at the C-terminus are polyglutamylated, resulting in polyglutamate chains on the gamma-carboxyl group. Polyglutamylation plays a key role in microtubule severing by spastin (SPAST). SPAST preferentially recognizes and acts on microtubules decorated with short polyglutamate tails: severing activity by SPAST increases as the number of glutamates per tubulin rises from one to eight, but decreases beyond this glutamylation threshold. In terms of tissue distribution, neuron specific.

It is found in the cytoplasm. It localises to the cytoskeleton. Tubulin is the major constituent of microtubules, a cylinder consisting of laterally associated linear protofilaments composed of alpha- and beta-tubulin heterodimers. Microtubules grow by the addition of GTP-tubulin dimers to the microtubule end, where a stabilizing cap forms. Below the cap, tubulin dimers are in GDP-bound state, owing to GTPase activity of alpha-tubulin. The polypeptide is Tubulin beta-4 chain (Gallus gallus (Chicken)).